The sequence spans 244 residues: MNQYNFILDASAFEKGLGNVKRWCQSNGNVDGKKNVYLRFYVPTFTLQELNFLQYRHKSFSAKEALKFIDKLETATSEGQRNHVVIGRKKEEDLRSDLELFIEFPDILDAVTWPTVLSYCTEGQATIDSLNKLPKRFKILLKSCVYKCHLEDDDRIRWILVTEDPQVRKIASQCHIPWCSIVDADSIISKDMNDRSFRDSEKFNSMMLKRGVAKSENMDGKEVIKTNFDQTVYATRGSGKLWTP.

It is found in the cytoplasm. Involved in nonsense-mediated decay of mRNAs containing premature stop codons. In Candida glabrata (strain ATCC 2001 / BCRC 20586 / JCM 3761 / NBRC 0622 / NRRL Y-65 / CBS 138) (Yeast), this protein is Nonsense-mediated decay protein 4 (NMD4).